A 465-amino-acid polypeptide reads, in one-letter code: Ran-binding protein 3-like (465 aa).

The region spanning Ser-276–Asp-417 is the RanBD1 domain.

In terms of assembly, interacts with SMAD1, SMAD5 and SMAD8; the interaction (with SMAD at least) increases when SMAD1 is not phosphorylated and mediates SMAD1 nuclear export.

Its subcellular location is the nucleus. It is found in the cytoplasm. Nuclear export factor for BMP-specific SMAD1/5/8 that plays a critical role in terminating BMP signaling and regulating mesenchymal stem cell differentiation by blocking osteoblast differentiation to promote myogenic differention. Directly recognizes dephosphorylated SMAD1/5/8 and mediates their nuclear export in a Ran-dependent manner. This is Ran-binding protein 3-like (RANBP3L) from Homo sapiens (Human).